The sequence spans 236 residues: (5-formylfuran-3-yl)methyl phosphate synthase (236 aa).

Lys27 serves as the catalytic Schiff-base intermediate with substrate. The active-site Proton acceptor is the Lys85.

This sequence belongs to the MfnB family.

It catalyses the reaction 2 D-glyceraldehyde 3-phosphate = 4-(hydroxymethyl)-2-furancarboxaldehyde phosphate + phosphate + 2 H2O. The protein operates within cofactor biosynthesis; methanofuran biosynthesis. In terms of biological role, catalyzes the formation of 4-(hydroxymethyl)-2-furancarboxaldehyde phosphate (4-HFC-P) from two molecules of glyceraldehyde-3-P (GA-3-P). This chain is (5-formylfuran-3-yl)methyl phosphate synthase, found in Methanococcus maripaludis (strain C7 / ATCC BAA-1331).